A 318-amino-acid chain; its full sequence is Dimethyladenosine transferase (318 aa).

Residues His-37, Leu-39, Gly-64, Glu-85, Asp-113, and Asn-128 each contribute to the S-adenosyl-L-methionine site.

The protein belongs to the class I-like SAM-binding methyltransferase superfamily. rRNA adenine N(6)-methyltransferase family.

It localises to the cytoplasm. It is found in the nucleus. The protein localises to the nucleolus. The enzyme catalyses adenosine(1779)/adenosine(1780) in 18S rRNA + 4 S-adenosyl-L-methionine = N(6)-dimethyladenosine(1779)/N(6)-dimethyladenosine(1780) in 18S rRNA + 4 S-adenosyl-L-homocysteine + 4 H(+). Functionally, specifically dimethylates two adjacent adenosines in the loop of a conserved hairpin near the 3'-end of 18S rRNA in the 40S particle. This chain is Dimethyladenosine transferase, found in Saccharomyces cerevisiae (strain ATCC 204508 / S288c) (Baker's yeast).